Here is a 378-residue protein sequence, read N- to C-terminus: Apoptosis-inducing factor 1 (378 aa).

Residues 7 to 25 traverse the membrane as a helical segment; the sequence is NIVVVGAGVFGVSVANHLY. FAD contacts are provided by residues 12–16, Arg51, Lys56, and Asp283; that span reads GAGVF.

Belongs to the FAD-dependent oxidoreductase family. It depends on FAD as a cofactor.

The protein localises to the mitochondrion outer membrane. It is found in the nucleus. In terms of biological role, putative FAD-dependent oxidoreductase involved in the resistance to cercosporin and other singlet oxygen-generating photosensitizers. Translocates from mitochondria to the nucleus under apoptotic conditions, where it degrades DNA and induces apoptosis. The chain is Apoptosis-inducing factor 1 (AIF1) from Saccharomyces cerevisiae (strain ATCC 204508 / S288c) (Baker's yeast).